The chain runs to 216 residues: Translation initiation factor 6 (216 aa).

It belongs to the eIF-6 family.

Functionally, binds to the 50S ribosomal subunit and prevents its association with the 30S ribosomal subunit to form the 70S initiation complex. This Thermoplasma acidophilum (strain ATCC 25905 / DSM 1728 / JCM 9062 / NBRC 15155 / AMRC-C165) protein is Translation initiation factor 6.